The primary structure comprises 112 residues: UPF0342 protein SUB0718 (112 aa).

It belongs to the UPF0342 family.

This Streptococcus uberis (strain ATCC BAA-854 / 0140J) protein is UPF0342 protein SUB0718.